The chain runs to 307 residues: 2-dehydropantoate 2-reductase (307 aa).

NADP(+)-binding positions include 7–12, N102, and A128; that span reads GSGAMG. N102 is a substrate binding site. The Proton donor role is filled by K184. Substrate contacts are provided by N188, N192, and S255. Position 268 (E268) interacts with NADP(+).

It belongs to the ketopantoate reductase family.

The protein localises to the cytoplasm. The catalysed reaction is (R)-pantoate + NADP(+) = 2-dehydropantoate + NADPH + H(+). The protein operates within cofactor biosynthesis; (R)-pantothenate biosynthesis; (R)-pantoate from 3-methyl-2-oxobutanoate: step 2/2. Its function is as follows. Catalyzes the NADPH-dependent reduction of ketopantoate into pantoic acid. The chain is 2-dehydropantoate 2-reductase (apbA) from Streptococcus pyogenes serotype M18 (strain MGAS8232).